The chain runs to 287 residues: PAK4-inhibitor INKA1 (287 aa).

Disordered stretches follow at residues 22–59 (GRDT…LEED) and 138–157 (SRAP…KSTP). Residues 35–50 (QPTSQTGPDVQPSHQL) show a composition bias toward polar residues. The span at 138–147 (SRAPVASVPP) shows a compositional bias: low complexity. Inka box stretches follow at residues 168-205 (EAED…ELPE) and 261-287 (PADV…VSYL).

It belongs to the INKA family. As to quaternary structure, interacts with PAK4.

It localises to the nucleus. The protein resides in the cytoplasm. In terms of biological role, inhibitor of the serine/threonine-protein kinase PAK4. Acts by binding PAK4 in a substrate-like manner, inhibiting the protein kinase activity. The protein is PAK4-inhibitor INKA1 of Homo sapiens (Human).